We begin with the raw amino-acid sequence, 519 residues long: Pleckstrin homology domain-containing family A member 8 (519 aa).

Residues 1–93 (MEGVLYKWTN…WLVALGSAKA (93 aa)) form the PH domain. Thr139 is modified (phosphothreonine). Position 145 is a phosphoserine (Ser145). Thr153 is modified (phosphothreonine). The disordered stretch occupies residues 274–302 (GEDNLGNHDSSLAQPASDSSSSPPESHWE). Residues 282–298 (DSSLAQPASDSSSSPPE) are compositionally biased toward low complexity. Residues 310–519 (TFFSTMNTSF…VHGLESDEVV (210 aa)) are glycolipid transfer protein homology domain.

Homodimer. Interacts with ARF1; the interaction together with phosphatidylinositol 4-phosphate binding is required for FAPP2 GlcCer transfer ability.

The protein localises to the golgi apparatus. It localises to the trans-Golgi network membrane. Its subcellular location is the membrane. Cargo transport protein that is required for apical transport from the trans-Golgi network (TGN). Transports AQP2 from the trans-Golgi network (TGN) to sites of AQP2 phosphorylation. Mediates the non-vesicular transport of glucosylceramide (GlcCer) from the trans-Golgi network (TGN) to the plasma membrane and plays a pivotal role in the synthesis of complex glycosphingolipids. Binding of both phosphatidylinositol 4-phosphate (PIP) and ARF1 are essential for the GlcCer transfer ability. Also required for primary cilium formation, possibly by being involved in the transport of raft lipids to the apical membrane, and for membrane tubulation. This is Pleckstrin homology domain-containing family A member 8 (PLEKHA8) from Canis lupus familiaris (Dog).